Reading from the N-terminus, the 173-residue chain is Small ribosomal subunit protein uS5 (173 aa).

Positions 17 to 80 (WQERVIQIRR…ADGKKQLIEV (64 aa)) constitute an S5 DRBM domain.

Belongs to the universal ribosomal protein uS5 family. In terms of assembly, part of the 30S ribosomal subunit. Contacts proteins S4 and S8.

In terms of biological role, with S4 and S12 plays an important role in translational accuracy. Located at the back of the 30S subunit body where it stabilizes the conformation of the head with respect to the body. This Microcystis aeruginosa (strain NIES-843 / IAM M-2473) protein is Small ribosomal subunit protein uS5.